A 304-amino-acid polypeptide reads, in one-letter code: Coenzyme PQQ synthesis protein B (304 aa).

Belongs to the PqqB family.

It functions in the pathway cofactor biosynthesis; pyrroloquinoline quinone biosynthesis. Its function is as follows. May be involved in the transport of PQQ or its precursor to the periplasm. The polypeptide is Coenzyme PQQ synthesis protein B (Pseudomonas paraeruginosa (strain DSM 24068 / PA7) (Pseudomonas aeruginosa (strain PA7))).